The following is a 126-amino-acid chain: Arginine decarboxylase proenzyme (126 aa).

S74 serves as the catalytic Schiff-base intermediate with substrate; via pyruvic acid. Residue S74 is modified to Pyruvic acid (Ser); by autocatalysis. The Proton acceptor; for processing activity role is filled by H79. C94 acts as the Proton donor; for catalytic activity in catalysis.

It belongs to the prokaryotic AdoMetDC family. Type 1 subfamily. Heterooctamer of four alpha and four beta chains arranged as a tetramer of alpha/beta heterodimers. Pyruvate serves as cofactor. In terms of processing, is synthesized initially as an inactive proenzyme. Formation of the active enzyme involves a self-maturation process in which the active site pyruvoyl group is generated from an internal serine residue via an autocatalytic post-translational modification. Two non-identical subunits are generated from the proenzyme in this reaction, and the pyruvate is formed at the N-terminus of the alpha chain, which is derived from the carboxyl end of the proenzyme. The post-translation cleavage follows an unusual pathway, termed non-hydrolytic serinolysis, in which the side chain hydroxyl group of the serine supplies its oxygen atom to form the C-terminus of the beta chain, while the remainder of the serine residue undergoes an oxidative deamination to produce ammonia and the pyruvoyl group blocking the N-terminus of the alpha chain.

The enzyme catalyses L-arginine + H(+) = agmatine + CO2. It participates in amine and polyamine biosynthesis; agmatine biosynthesis; agmatine from L-arginine: step 1/1. Its function is as follows. Specifically catalyzes the decarboxylation of L-arginine to agmatine. Has no S-adenosylmethionine decarboxylase (AdoMetDC) activity. The polypeptide is Arginine decarboxylase proenzyme (Pyrobaculum islandicum (strain DSM 4184 / JCM 9189 / GEO3)).